The primary structure comprises 481 residues: 3-isopropylmalate dehydratase large subunit (481 aa).

The [4Fe-4S] cluster site is built by Cys355, Cys415, and Cys418.

This sequence belongs to the aconitase/IPM isomerase family. LeuC type 1 subfamily. Heterodimer of LeuC and LeuD. [4Fe-4S] cluster is required as a cofactor.

It carries out the reaction (2R,3S)-3-isopropylmalate = (2S)-2-isopropylmalate. The protein operates within amino-acid biosynthesis; L-leucine biosynthesis; L-leucine from 3-methyl-2-oxobutanoate: step 2/4. Functionally, catalyzes the isomerization between 2-isopropylmalate and 3-isopropylmalate, via the formation of 2-isopropylmaleate. This is 3-isopropylmalate dehydratase large subunit from Symbiobacterium thermophilum (strain DSM 24528 / JCM 14929 / IAM 14863 / T).